Consider the following 340-residue polypeptide: MTTVTPSAGRELSNPPSDGISNLRFSNNSDHLLVSSWDKRVRLYDVSTNSLKGEFLHGGAVLDCCFHDDFSGFSVGADYKVRRIVFNVGKEDILGTHDKAVRCVEYSYAAGQVITGSWDKTVKCWDPRGASGPERTQVGTYLQPERVYSMSLVGHRLVVATAGRHVNIYDLRNMSQPEQRRESSLKYQTRCVRCYPNGTGYALSSVEGRVAMEFFDLSEAAQAKKYAFKCHRKSEAGRDIVYPVNSIAFHPIYGTFATGGCDGFVNIWDGNNKKRLYQYSKYPTSISALSFSRDGQLLAVASSYTFEEGEKSQEPEAIFVRSVNEIEVKPKPKVYPNPAA.

The tract at residues 1–20 (MTTVTPSAGRELSNPPSDGI) is disordered. WD repeat units follow at residues 15-54 (PPSD…LKGE), 96-135 (THDK…GPER), 142-179 (LQPE…QPEQ), 239-278 (DIVY…RLYQ), and 281-324 (KYPT…RSVN).

Belongs to the WD repeat BUB3 family. Part of the mitotic checkpoint complex (MCC); interacts with CDC20-1 and CDC20-2. Interacts with MAD2 and BUBR1. As to expression, expressed in actively dividing tissues, early in organ development, in young leaves, lateral root primordia and root meristems, flower buds, flowers and siliques.

Its subcellular location is the nucleus. It is found in the chromosome. The protein localises to the centromere. It localises to the kinetochore. The protein resides in the cytoplasm. Its subcellular location is the cytoskeleton. It is found in the phragmoplast. The protein localises to the spindle. In terms of biological role, has a dual function in spindle-assembly checkpoint signaling and in promoting the establishment of correct kinetochore-microtubule (K-MT) attachments. Promotes the formation of stable end-on bipolar attachments. Necessary for kinetochore localization of BUB1. The BUB1/BUB3 complex plays a role in the inhibition of anaphase-promoting complex or cyclosome (APC/C) when spindle-assembly checkpoint is activated and inhibits the ubiquitin ligase activity of APC/C by phosphorylating its activator CDC20. Essential for gametophyte development. This Arabidopsis thaliana (Mouse-ear cress) protein is Mitotic checkpoint protein BUB3.1 (BUB3.1).